We begin with the raw amino-acid sequence, 355 residues long: Peptide chain release factor 1 (355 aa).

An N5-methylglutamine modification is found at Q233. A compositionally biased stretch (basic and acidic residues) spans 280 to 293 (ERRKKEQERADSRR). The interval 280-306 (ERRKKEQERADSRRGQVGSGNRSERIR) is disordered.

The protein belongs to the prokaryotic/mitochondrial release factor family. Post-translationally, methylated by PrmC. Methylation increases the termination efficiency of RF1.

It localises to the cytoplasm. Its function is as follows. Peptide chain release factor 1 directs the termination of translation in response to the peptide chain termination codons UAG and UAA. The sequence is that of Peptide chain release factor 1 from Rickettsia africae (strain ESF-5).